Consider the following 296-residue polypeptide: Thioredoxin-related transmembrane protein 2 (296 aa).

An N-terminal signal peptide occupies residues 1-48; that stretch reads MAVLAPLIALVYSVPRLSRWLAQPYYLLSALLSAAFLLVRKLPPLCHG. At 49–102 the chain is on the extracellular side; it reads LPTQREDGNPCDFDWREVEILMFLSAIVMMKNRRSITVEQHIGNIFMFSKVANA. A helical membrane pass occupies residues 103–125; sequence ILFFRLDIRMGLLYITLCIVFLM. In terms of domain architecture, Thioredoxin spans 114 to 269; the sequence is LLYITLCIVF…LYQRAKKLSK (156 aa). The Cytoplasmic segment spans residues 126-296; sequence TCKPPLYMGP…VSDGESKKDK (171 aa). 3 positions are modified to phosphoserine: S211, S243, and S288. The tract at residues 269 to 296 is disordered; that stretch reads KAGDNIPEEQPVAPTPTRVSDGESKKDK. The Di-lysine motif signature appears at 293–296; it reads KKDK.

As to quaternary structure, monomer. Homodimer; disulfide-linked. Occurs in both reduced and oxidized monomeric form. Oxidative conditions increase homodimerization. Interacts with CANX. Interacts with ATP2A2.

The protein localises to the endoplasmic reticulum membrane. The protein resides in the mitochondrion membrane. Its function is as follows. Endoplasmic reticulum and mitochondria-associated protein that probably functions as a regulator of cellular redox state and thereby regulates protein post-translational modification, protein folding and mitochondrial activity. Indirectly regulates neuronal proliferation, migration, and organization in the developing brain. The polypeptide is Thioredoxin-related transmembrane protein 2 (TMX2) (Macaca fascicularis (Crab-eating macaque)).